Reading from the N-terminus, the 265-residue chain is Glutamate racemase (265 aa).

Residues 10 to 11 and 42 to 43 each bind substrate; these read DS and YG. Cys-73 functions as the Proton donor/acceptor in the catalytic mechanism. A substrate-binding site is contributed by 74-75; sequence NT. Cys-184 acts as the Proton donor/acceptor in catalysis. 185 to 186 is a binding site for substrate; sequence TH.

Belongs to the aspartate/glutamate racemases family.

The enzyme catalyses L-glutamate = D-glutamate. Its pathway is cell wall biogenesis; peptidoglycan biosynthesis. Provides the (R)-glutamate required for cell wall biosynthesis. The polypeptide is Glutamate racemase (Pediococcus pentosaceus (strain ATCC 25745 / CCUG 21536 / LMG 10740 / 183-1w)).